The primary structure comprises 501 residues: Acid-sensing ion channel 1A (501 aa).

At 1-54 (MKTSVMDLKVEPMDIDFDQPPPLQVFAHTSTLHGISHIFSYEKITAKCCLWVVF) the chain is on the cytoplasmic side. The chain crosses the membrane as a helical span at residues 55 to 71 (FLSSLTFLMYVCIDRIQ). Over 72–429 (FYLEYPHVTK…ETIEQRKAYE (358 aa)) the chain is Extracellular. Cystine bridges form between cysteine 98-cysteine 199, cysteine 177-cysteine 184, cysteine 294-cysteine 369, cysteine 312-cysteine 365, cysteine 316-cysteine 363, cysteine 325-cysteine 347, and cysteine 327-cysteine 339. N-linked (GlcNAc...) asparagine glycosylation is present at asparagine 164. Asparagine 370 is a glycosylation site (N-linked (GlcNAc...) asparagine). The discontinuously helical transmembrane segment at 430–460 (VAGLLGDIGGQMGLFIGASILTILELFDYLY) threads the bilayer. The short motif at 446–448 (GAS) is the GAS motif; ion selectivity filter element. Residues 461 to 501 (EVMKYRLCRCSNKKHHNNNNNTDHNAVFSLDDVNCHVSKFH) are Cytoplasmic-facing.

It belongs to the amiloride-sensitive sodium channel (TC 1.A.6) family. ASIC1 subfamily. As to quaternary structure, homotrimer. Heterotrimer; with other ASIC proteins producing channel with different properties. Interacts with asic1c. Expressed in central nervous system. Faintly expressed in the trunk, presumably in dorsal root ganglia.

It localises to the cell membrane. Its subcellular location is the postsynaptic cell membrane. The protein localises to the cell projection. It is found in the dendrite. It catalyses the reaction Na(+)(in) = Na(+)(out). It carries out the reaction K(+)(in) = K(+)(out). The enzyme catalyses Li(+)(in) = Li(+)(out). The catalysed reaction is Ca(2+)(in) = Ca(2+)(out). Inhibited by the diuretic drug amiloride. Functionally, forms voltage-independent, pH-gated trimeric sodium channels that act as postsynaptic excitatory receptors in the nervous system, playing a crucial role in regulating synaptic plasticity, learning, and memory. Upon extracellular pH drop this channel elicits transient, fast activating, and completely desensitizing inward currents. Displays high selectivity for sodium ions but can also permit the permeation of other cations. This is Acid-sensing ion channel 1A (asic1a) from Danio rerio (Zebrafish).